We begin with the raw amino-acid sequence, 145 residues long: uncharacterized protein (145 aa).

The 68-residue stretch at 78 to 145 (KLQIVAKDRI…DVVEKISILW (68 aa)) folds into the ACT domain.

This is an uncharacterized protein from Methanocaldococcus jannaschii (strain ATCC 43067 / DSM 2661 / JAL-1 / JCM 10045 / NBRC 100440) (Methanococcus jannaschii).